The chain runs to 611 residues: Chaperone protein DnaK (611 aa).

At T173 the chain carries Phosphothreonine; by autocatalysis. Residues 577–592 show a composition bias toward low complexity; the sequence is QAAAGQAEGAEGAQDA. Positions 577–598 are disordered; sequence QAAAGQAEGAEGAQDAGAKKDN.

Belongs to the heat shock protein 70 family.

Functionally, acts as a chaperone. The polypeptide is Chaperone protein DnaK (Bacillus anthracis (strain A0248)).